Consider the following 319-residue polypeptide: GTP 3',8-cyclase (319 aa).

The Radical SAM core domain maps to 4 to 227; the sequence is KHGRKINYLR…VETEKSSTAL (224 aa). Arg13 contacts GTP. [4Fe-4S] cluster is bound by residues Cys20 and Cys24. Tyr26 provides a ligand contact to S-adenosyl-L-methionine. Cys27 serves as a coordination point for [4Fe-4S] cluster. Arg63 is a binding site for GTP. Gly67 is a binding site for S-adenosyl-L-methionine. A GTP-binding site is contributed by Thr94. Ser118 lines the S-adenosyl-L-methionine pocket. Residue Lys155 coordinates GTP. Met189 serves as a coordination point for S-adenosyl-L-methionine. [4Fe-4S] cluster is bound by residues Cys249 and Cys252. A GTP-binding site is contributed by 254–256; sequence RVR. Residue Cys266 coordinates [4Fe-4S] cluster.

Belongs to the radical SAM superfamily. MoaA family. Monomer and homodimer. It depends on [4Fe-4S] cluster as a cofactor.

It carries out the reaction GTP + AH2 + S-adenosyl-L-methionine = (8S)-3',8-cyclo-7,8-dihydroguanosine 5'-triphosphate + 5'-deoxyadenosine + L-methionine + A + H(+). It functions in the pathway cofactor biosynthesis; molybdopterin biosynthesis. Its function is as follows. Catalyzes the cyclization of GTP to (8S)-3',8-cyclo-7,8-dihydroguanosine 5'-triphosphate. The sequence is that of GTP 3',8-cyclase from Clostridium botulinum (strain ATCC 19397 / Type A).